The sequence spans 147 residues: Acidic phospholipase A2 S3-24 (147 aa).

The N-terminal stretch at 1–19 (MYPAHLLVLLAVCVSLLGA) is a signal peptide. The propeptide occupies 20–27 (SDMPPQPL). Cystine bridges form between Cys-38/Cys-99, Cys-54/Cys-146, Cys-56/Cys-72, Cys-71/Cys-127, Cys-78/Cys-120, Cys-88/Cys-113, and Cys-106/Cys-118. Ca(2+)-binding residues include Tyr-55, Gly-57, and Gly-59. Residue His-75 is part of the active site. Asp-76 serves as a coordination point for Ca(2+). Asp-121 is a catalytic residue.

This sequence belongs to the phospholipase A2 family. Group I subfamily. D49 sub-subfamily. The cofactor is Ca(2+). Expressed by the venom gland.

It is found in the secreted. It catalyses the reaction a 1,2-diacyl-sn-glycero-3-phosphocholine + H2O = a 1-acyl-sn-glycero-3-phosphocholine + a fatty acid + H(+). In terms of biological role, snake venom phospholipase A2 (PLA2) that inhibits collagen-induced platelet aggregation. PLA2 catalyzes the calcium-dependent hydrolysis of the 2-acyl groups in 3-sn-phosphoglycerides. The protein is Acidic phospholipase A2 S3-24 of Austrelaps superbus (Lowland copperhead snake).